The chain runs to 190 residues: R46 site-specific recombinase (190 aa).

The Resolvase/invertase-type recombinase catalytic domain occupies 2–137 (RLFGYARVST…EGRQEAKLKG (136 aa)). The active-site O-(5'-phospho-DNA)-serine intermediate is S10. The segment at residues 161–180 (ATDIARRLSIARSTVYKILE) is a DNA-binding region (H-T-H motif).

Belongs to the site-specific recombinase resolvase family.

Its function is as follows. Site-specific recombination protein. The protein is R46 site-specific recombinase (tnpR) of Escherichia coli.